A 355-amino-acid chain; its full sequence is Methylthioribose-1-phosphate isomerase (355 aa).

Substrate contacts are provided by residues 52-54 (RGA), R95, and Q204. D245 serves as the catalytic Proton donor. 255–256 (NK) lines the substrate pocket.

This sequence belongs to the eIF-2B alpha/beta/delta subunits family. MtnA subfamily.

It catalyses the reaction 5-(methylsulfanyl)-alpha-D-ribose 1-phosphate = 5-(methylsulfanyl)-D-ribulose 1-phosphate. It participates in amino-acid biosynthesis; L-methionine biosynthesis via salvage pathway; L-methionine from S-methyl-5-thio-alpha-D-ribose 1-phosphate: step 1/6. Its function is as follows. Catalyzes the interconversion of methylthioribose-1-phosphate (MTR-1-P) into methylthioribulose-1-phosphate (MTRu-1-P). In Acaryochloris marina (strain MBIC 11017), this protein is Methylthioribose-1-phosphate isomerase.